We begin with the raw amino-acid sequence, 288 residues long: Probable prolyl 4-hydroxylase 9 (288 aa).

The Cytoplasmic portion of the chain corresponds to methionine 1 to lysine 12. The chain crosses the membrane as a helical; Signal-anchor for type II membrane protein span at residues leucine 13–serine 33. Residues threonine 34–glutamate 288 are Lumenal-facing. Residues histidine 164–aspartate 283 enclose the Fe2OG dioxygenase domain. Fe cation-binding residues include histidine 182 and aspartate 184. N-linked (GlcNAc...) asparagine glycans are attached at residues asparagine 221 and asparagine 255. A Fe cation-binding site is contributed by histidine 264. Lysine 274 serves as a coordination point for 2-oxoglutarate.

The protein belongs to the P4HA family. Fe(2+) serves as cofactor. The cofactor is L-ascorbate.

It localises to the endoplasmic reticulum membrane. The protein resides in the golgi apparatus. It carries out the reaction L-prolyl-[collagen] + 2-oxoglutarate + O2 = trans-4-hydroxy-L-prolyl-[collagen] + succinate + CO2. In terms of biological role, catalyzes the post-translational formation of 4-hydroxyproline in -Xaa-Pro-Gly- sequences in proline-rich peptide sequences of plant glycoproteins and other proteins. Hydroxyprolines are important constituent of many plant cell wall glycoproteins such as extensins, hydroxyproline-rich glycoproteins, lectins and arabinogalactan proteins. The polypeptide is Probable prolyl 4-hydroxylase 9 (Arabidopsis thaliana (Mouse-ear cress)).